A 604-amino-acid polypeptide reads, in one-letter code: Ribosome-inactivating protein PMRIPm (604 aa).

A signal peptide spans 1-43 (MRVVAAILYINVVVALICGLGIQGGALDLQDYPSVSFQGDAMQ). Glu-211 is a catalytic residue. 3 disulfide bridges follow: Cys-301/Cys-332, Cys-348/Cys-367, and Cys-392/Cys-409. 2 Ricin B-type lectin domains span residues 335-463 (GEPT…WRVG) and 466-598 (VEPI…WLTV). Residues 345–387 (AGWCVDVKDGRDNDGNPIQVLSCGDGQERKQQWTFHRDGTIRS) form a 1-alpha repeat. Residues 389 to 429 (LGKCMTAYGFKHGEYVMIYDCDTAIAGANKWVVSIDGTITN) form a 1-beta repeat. The 1-gamma repeat unit spans residues 432-465 (SGLVLTAPRGATGTTLLVEKNVHAARQCWRVGDD). One copy of the 2-alpha repeat lies at 477–521 (QEKCLEANYLENTNVSRYTKVFLDDCVLDRQQQRWALYSDGTIRA). Cys-480 and Cys-502 form a disulfide bridge. A glycan (N-linked (GlcNAc...) asparagine) is linked at Asn-490. A 2-beta repeat occupies 525 to 563 (RSLRVTADGHRSLDSIIILACKGWGNQRWVFNTDGTILN). Residues 566 to 599 (AKLVMDVKDSDVSLLQIILHQSTGKPNQKWLTVT) form a 2-gamma repeat.

This sequence belongs to the ribosome-inactivating protein family. Type 2 RIP subfamily. In terms of assembly, disulfide-linked dimer of A and B chains. The precursor is processed in two chains, A and B, that are linked by a disulfide bond. In terms of processing, glycosylated. Post-translationally, the N-terminus is blocked. As to expression, expressed in rhizome and abundantly in leaves (at protein level).

It catalyses the reaction Endohydrolysis of the N-glycosidic bond at one specific adenosine on the 28S rRNA.. With respect to regulation, strongly inhibited by asialofetuin and asialomucin. In terms of biological role, gal/GalNAc-specific agglutinin. Behaves as a type-2 ribosome-inactivating protein. Inhibits mammalian ribosomes. The A chain is responsible for inhibiting protein synthesis through the catalytic inactivation of 60S ribosomal subunits by removing adenine from position 4,324 of 28S rRNA. The B chain binds to cell receptors and probably facilitates the entry into the cell of the A chain; B chains are also responsible for cell agglutination (lectin activity). Involved in plant defense against insects. Has very low cytotoxic activity against the human tumor cell line Molt4, but higher against CEM. This is Ribosome-inactivating protein PMRIPm from Polygonatum multiflorum (Solomon's seal).